A 351-amino-acid polypeptide reads, in one-letter code: Peptide chain release factor 1 (351 aa).

Gln229 bears the N5-methylglutamine mark.

It belongs to the prokaryotic/mitochondrial release factor family. Post-translationally, methylated by PrmC. Methylation increases the termination efficiency of RF1.

It localises to the cytoplasm. Functionally, peptide chain release factor 1 directs the termination of translation in response to the peptide chain termination codons UAG and UAA. This Cereibacter sphaeroides (strain ATCC 17025 / ATH 2.4.3) (Rhodobacter sphaeroides) protein is Peptide chain release factor 1.